Consider the following 195-residue polypeptide: Pyridoxal 5'-phosphate synthase subunit PdxT (195 aa).

Residue 46 to 48 (GES) coordinates L-glutamine. Cys-78 functions as the Nucleophile in the catalytic mechanism. L-glutamine-binding positions include Arg-107 and 136 to 137 (IR). Active-site charge relay system residues include His-173 and Glu-175.

The protein belongs to the glutaminase PdxT/SNO family. As to quaternary structure, in the presence of PdxS, forms a dodecamer of heterodimers. Only shows activity in the heterodimer.

It carries out the reaction aldehydo-D-ribose 5-phosphate + D-glyceraldehyde 3-phosphate + L-glutamine = pyridoxal 5'-phosphate + L-glutamate + phosphate + 3 H2O + H(+). The enzyme catalyses L-glutamine + H2O = L-glutamate + NH4(+). It participates in cofactor biosynthesis; pyridoxal 5'-phosphate biosynthesis. In terms of biological role, catalyzes the hydrolysis of glutamine to glutamate and ammonia as part of the biosynthesis of pyridoxal 5'-phosphate. The resulting ammonia molecule is channeled to the active site of PdxS. The sequence is that of Pyridoxal 5'-phosphate synthase subunit PdxT from Dehalococcoides mccartyi (strain ATCC BAA-2266 / KCTC 15142 / 195) (Dehalococcoides ethenogenes (strain 195)).